The chain runs to 478 residues: Chromosomal replication initiator protein DnaA (478 aa).

Positions 1–95 are domain I, interacts with DnaA modulators; sequence MNKTLNPQEV…DVLEKEITEE (95 aa). The interval 96–141 is domain II; the sequence is INDLVQSMEEEDFALIDHTKPVIPNFFDQNTRVNFGGGPNNHHPTT. Residues 142-358 form a domain III, AAA+ region region; sequence GVNPRFTFDN…GALLRIFALA (217 aa). The ATP site is built by glycine 186, glycine 188, lysine 189, and threonine 190. The segment at 359–478 is domain IV, binds dsDNA; that stretch reads SFNKEEINMT…YKLTQFILRR (120 aa).

It belongs to the DnaA family. In terms of assembly, oligomerizes as a right-handed, spiral filament on DNA at oriC.

The protein localises to the cytoplasm. In terms of biological role, plays an essential role in the initiation and regulation of chromosomal replication. ATP-DnaA binds to the origin of replication (oriC) to initiate formation of the DNA replication initiation complex once per cell cycle. Binds the DnaA box (a 9 base pair repeat at the origin) and separates the double-stranded (ds)DNA. Forms a right-handed helical filament on oriC DNA; dsDNA binds to the exterior of the filament while single-stranded (ss)DNA is stabiized in the filament's interior. The ATP-DnaA-oriC complex binds and stabilizes one strand of the AT-rich DNA unwinding element (DUE), permitting loading of DNA polymerase. After initiation quickly degrades to an ADP-DnaA complex that is not apt for DNA replication. Binds acidic phospholipids. The polypeptide is Chromosomal replication initiator protein DnaA (Tropheryma whipplei (strain TW08/27) (Whipple's bacillus)).